The chain runs to 361 residues: uncharacterized protein (361 aa).

Disordered stretches follow at residues 53–75 and 150–211; these read KNISNNNNNNNNNNNNVCGNINN and NYNN…YHHY. The span at 150-198 shows a compositional bias: low complexity; it reads NYNNYNNNNNNNNNNNNNNNNNNNNNNNNNNNNNNKNNNKNNNNKPNNF. A compositionally biased stretch (basic residues) spans 199-211; that stretch reads IHHHHHHHHYHHY. Residues 225 to 245 traverse the membrane as a helical segment; sequence IFIGLMAFLILFILMVIGLLI.

The protein resides in the membrane. This is an uncharacterized protein from Dictyostelium discoideum (Social amoeba).